Consider the following 152-residue polypeptide: Large ribosomal subunit protein uL13 (152 aa).

The tract at residues E133–A152 is disordered. The span at Q139–A152 shows a compositional bias: polar residues.

It belongs to the universal ribosomal protein uL13 family. Part of the 50S ribosomal subunit.

In terms of biological role, this protein is one of the early assembly proteins of the 50S ribosomal subunit, although it is not seen to bind rRNA by itself. It is important during the early stages of 50S assembly. This is Large ribosomal subunit protein uL13 from Thermosynechococcus vestitus (strain NIES-2133 / IAM M-273 / BP-1).